We begin with the raw amino-acid sequence, 289 residues long: Digeranylgeranylglyceryl phosphate synthase (289 aa).

8 helical membrane passes run 17 to 37 (CLMA…ILTS), 50 to 70 (LFSS…GNAI), 106 to 126 (FALG…IALF), 141 to 161 (TPLL…LFGA), 163 to 183 (VFGL…ALAI), 221 to 241 (LIGF…MLGL), 243 to 263 (YLYL…QLLA), and 269 to 289 (KSSK…IAGV).

Belongs to the UbiA prenyltransferase family. DGGGP synthase subfamily. Mg(2+) is required as a cofactor.

Its subcellular location is the cell membrane. The enzyme catalyses sn-3-O-(geranylgeranyl)glycerol 1-phosphate + (2E,6E,10E)-geranylgeranyl diphosphate = 2,3-bis-O-(geranylgeranyl)-sn-glycerol 1-phosphate + diphosphate. It participates in membrane lipid metabolism; glycerophospholipid metabolism. Its function is as follows. Prenyltransferase that catalyzes the transfer of the geranylgeranyl moiety of geranylgeranyl diphosphate (GGPP) to the C2 hydroxyl of (S)-3-O-geranylgeranylglyceryl phosphate (GGGP). This reaction is the second ether-bond-formation step in the biosynthesis of archaeal membrane lipids. The sequence is that of Digeranylgeranylglyceryl phosphate synthase from Methanosarcina barkeri (strain Fusaro / DSM 804).